The sequence spans 61 residues: MAKKSMIAKAKRKPKFKVRAYTRCRICGRPKSVYRDFGLCRICLRKMANEGLLPGVKKASW.

Residues Cys24, Cys27, Cys40, and Cys43 each coordinate Zn(2+).

This sequence belongs to the universal ribosomal protein uS14 family. Zinc-binding uS14 subfamily. Part of the 30S ribosomal subunit. Contacts proteins S3 and S10. Requires Zn(2+) as cofactor.

In terms of biological role, binds 16S rRNA, required for the assembly of 30S particles and may also be responsible for determining the conformation of the 16S rRNA at the A site. The polypeptide is Small ribosomal subunit protein uS14 (Nitratiruptor sp. (strain SB155-2)).